A 154-amino-acid polypeptide reads, in one-letter code: Egg-lysin (154 aa).

The signal sequence occupies residues Met-1–Ser-18.

Homodimer. As to expression, sperm.

In terms of biological role, dissolves the egg vitelline layer nonenzymatically during fertilization. It creates a hole of about 3 mu-m in diameter through which the sperm pass. The sequence is that of Egg-lysin from Haliotis walallensis (Flat abalone).